Reading from the N-terminus, the 279-residue chain is ATP synthase gamma chain (279 aa).

The protein belongs to the ATPase gamma chain family. As to quaternary structure, F-type ATPases have 2 components, CF(1) - the catalytic core - and CF(0) - the membrane proton channel. CF(1) has five subunits: alpha(3), beta(3), gamma(1), delta(1), epsilon(1). CF(0) has three main subunits: a, b and c.

It localises to the cell membrane. Produces ATP from ADP in the presence of a proton gradient across the membrane. The gamma chain is believed to be important in regulating ATPase activity and the flow of protons through the CF(0) complex. The polypeptide is ATP synthase gamma chain (Mycoplasma pneumoniae (strain ATCC 29342 / M129 / Subtype 1) (Mycoplasmoides pneumoniae)).